The primary structure comprises 208 residues: Uracil phosphoribosyltransferase (208 aa).

5-phospho-alpha-D-ribose 1-diphosphate-binding positions include Arg-78, Arg-103, and 130–138 (DPMLATGGS). Residues Ile-193 and 198 to 200 (GDA) contribute to the uracil site. Asp-199 serves as a coordination point for 5-phospho-alpha-D-ribose 1-diphosphate.

It belongs to the UPRTase family. Requires Mg(2+) as cofactor.

The catalysed reaction is UMP + diphosphate = 5-phospho-alpha-D-ribose 1-diphosphate + uracil. It participates in pyrimidine metabolism; UMP biosynthesis via salvage pathway; UMP from uracil: step 1/1. Allosterically activated by GTP. Its function is as follows. Catalyzes the conversion of uracil and 5-phospho-alpha-D-ribose 1-diphosphate (PRPP) to UMP and diphosphate. The polypeptide is Uracil phosphoribosyltransferase (Neisseria meningitidis serogroup B (strain ATCC BAA-335 / MC58)).